The chain runs to 343 residues: Mesaconyl-CoA hydratase (343 aa).

A MaoC-like domain is found at 47–116; that stretch reads SDEFARACGL…STVIGLKENS (70 aa). Residues 60 to 63, 83 to 86, and 94 to 96 each bind substrate; these read PVDE, VANL, and LKP.

The enzyme catalyses (2R,3S)-beta-methylmalyl-CoA = 2-methylfumaryl-CoA + H2O. In terms of biological role, involved in the ethylmalonyl-CoA pathway for acetate assimilation. Catalyzes the reversible hydration of mesaconyl-CoA (2-methylfumaryl-CoA) to yield beta-methylmalyl-CoA ((2R,3S)-beta-methylmalyl-CoA). This is Mesaconyl-CoA hydratase (mch) from Cereibacter sphaeroides (strain ATCC 17023 / DSM 158 / JCM 6121 / CCUG 31486 / LMG 2827 / NBRC 12203 / NCIMB 8253 / ATH 2.4.1.) (Rhodobacter sphaeroides).